The primary structure comprises 288 residues: Pantothenate synthetase (288 aa).

30–37 (MGALHEGH) contacts ATP. Histidine 37 (proton donor) is an active-site residue. Glutamine 61 is a (R)-pantoate binding site. Glutamine 61 is a binding site for beta-alanine. 147–150 (GEKD) is a binding site for ATP. Glutamine 153 provides a ligand contact to (R)-pantoate. Residues leucine 176 and 184 to 187 (ISSR) contribute to the ATP site.

This sequence belongs to the pantothenate synthetase family. As to quaternary structure, homodimer.

It is found in the cytoplasm. It carries out the reaction (R)-pantoate + beta-alanine + ATP = (R)-pantothenate + AMP + diphosphate + H(+). It functions in the pathway cofactor biosynthesis; (R)-pantothenate biosynthesis; (R)-pantothenate from (R)-pantoate and beta-alanine: step 1/1. Functionally, catalyzes the condensation of pantoate with beta-alanine in an ATP-dependent reaction via a pantoyl-adenylate intermediate. This is Pantothenate synthetase from Prosthecochloris aestuarii (strain DSM 271 / SK 413).